Here is a 353-residue protein sequence, read N- to C-terminus: Trans-enoyl reductase fsa3 (353 aa).

45–48 (VDTK) contributes to the NADP(+) binding site. A substrate-binding site is contributed by 131–138 (ISFMTTGL). Residues 166 to 169 (SSAT), 189 to 192 (SPRN), Tyr-207, and 254 to 255 (LE) contribute to the NADP(+) site. 275–279 (GPQML) lines the substrate pocket. 344-345 (IS) lines the NADP(+) pocket.

It belongs to the zinc-containing alcohol dehydrogenase family. In terms of assembly, monomer.

It carries out the reaction L-serine + 7 malonyl-CoA + acetyl-CoA + 2 S-adenosyl-L-methionine + ATP + 8 NADPH + 11 H(+) = (5S)-3-[(2E,6R,8E,10E,12E)-2,6-dimethyltetradeca-2,8,10,12-tetraenoyl]-5-(hydroxymethyl)pyrrolidine-2,4-dione + AMP + 2 S-adenosyl-L-homocysteine + 7 CO2 + diphosphate + 8 NADP(+) + 8 CoA + 6 H2O. It functions in the pathway mycotoxin biosynthesis. Its function is as follows. Trans-enoyl reductase; part of the gene cluster that mediates the biosynthesis of HIV-1 integrase inhibitor equisetin and of fusarisetin A, both trans-fused decalin-containing tetramic acids showing also antimicrobial activity. The PKS module of fsa1 together with the enoylreductase fsa3 catalyze the formation of the polyketide unit which is then conjugated to L-serine by the condensation domain of the fsa1 NRPS module. Activity of the Dieckmann cyclase domain (RED) results in release of the Dieckmann product intermediate. Diels-Alderase fsa2 is involved in endo-selective Diels-Alder cycloaddition to form the decalin ring, leading to the production of N-desmethylequisetin also called trichosetin. Subsequent N-methylation is carried out by fsa4 to give equisetin. The enzymatic gene responsible for the conversion of equisetin to fusarisetin A has not been identified yet and is probably located outside of the fsa cluster. This chain is Trans-enoyl reductase fsa3, found in Fusarium sp. (strain FN080326).